Consider the following 409-residue polypeptide: tRNA-specific 2-thiouridylase MnmA (409 aa).

ATP contacts are provided by residues 40 to 47 (GLSGGVDS) and Leu-66. Cys-127 functions as the Nucleophile in the catalytic mechanism. Cys-127 and Cys-237 form a disulfide bridge. Residue Gly-152 participates in ATP binding. The segment at 156–179 (RIRHREDPEPQQALPGDSSGRHQL) is disordered. The segment at 187-189 (KDQ) is interaction with tRNA. Cys-237 (cysteine persulfide intermediate) is an active-site residue. Positions 342-343 (RY) are interaction with tRNA.

It belongs to the MnmA/TRMU family.

The protein resides in the cytoplasm. It catalyses the reaction S-sulfanyl-L-cysteinyl-[protein] + uridine(34) in tRNA + AH2 + ATP = 2-thiouridine(34) in tRNA + L-cysteinyl-[protein] + A + AMP + diphosphate + H(+). Catalyzes the 2-thiolation of uridine at the wobble position (U34) of tRNA, leading to the formation of s(2)U34. This chain is tRNA-specific 2-thiouridylase MnmA, found in Prochlorococcus marinus (strain MIT 9303).